The sequence spans 543 residues: Chaperonin GroEL 1 (543 aa).

ATP-binding positions include 29–32 (TLGP), 86–90 (DGTTT), Gly413, 479–481 (NAA), and Asp495. Residues 524–543 (PEPKDAAPAGVGGGGGDFDY) are disordered. Gly residues predominate over residues 533–543 (GVGGGGGDFDY).

Belongs to the chaperonin (HSP60) family. Forms a cylinder of 14 subunits composed of two heptameric rings stacked back-to-back. Interacts with the co-chaperonin GroES.

The protein localises to the cytoplasm. It carries out the reaction ATP + H2O + a folded polypeptide = ADP + phosphate + an unfolded polypeptide.. Its function is as follows. Together with its co-chaperonin GroES, plays an essential role in assisting protein folding. The GroEL-GroES system forms a nano-cage that allows encapsulation of the non-native substrate proteins and provides a physical environment optimized to promote and accelerate protein folding. This is Chaperonin GroEL 1 from Anabaena sp. (strain L31).